The chain runs to 377 residues: Pseudouridylate synthase RPUSD4, mitochondrial (377 aa).

Residues 51–70 (LRAQKQQQKTKEPAPTNPVQ) are disordered. D153 is a catalytic residue.

This sequence belongs to the pseudouridine synthase RluA family. In terms of assembly, interacts with 16S mt-rRNA, mt-tRNA(Phe) and mt-tRNA(Met). Forms a regulatory protein-RNA complex, consisting of RCC1L, NGRN, RPUSD3, RPUSD4, TRUB2, FASTKD2 and 16S mt-rRNA.

It localises to the mitochondrion matrix. Its subcellular location is the nucleus. It is found in the cytoplasm. It catalyses the reaction uridine in 5S rRNA = pseudouridine in 5S rRNA. The catalysed reaction is a uridine in tRNA = a pseudouridine in tRNA. It carries out the reaction a uridine in mRNA = a pseudouridine in mRNA. In terms of biological role, catalyzes uridine to pseudouridine isomerization (pseudouridylation) of different mitochondrial RNA substrates. Acts on position 1397 in 16S mitochondrial ribosomal RNA (16S mt-rRNA). This modification is required for the assembly of 16S mt-rRNA into a functional mitochondrial ribosome. As a component of a functional protein-RNA module, consisting of RCC1L, NGRN, RPUSD3, RPUSD4, TRUB2, FASTKD2 and 16S mt-rRNA, controls 16S mt-rRNA abundance and is required for intra-mitochondrial translation. Acts on position 39 in mitochondrial tRNA(Phe). Also catalyzes pseudouridylation of mRNAs in nucleus: acts as a regulator of pre-mRNA splicing by mediating pseudouridylation of pre-mRNAs at locations associated with alternatively spliced regions. Pseudouridylation of pre-mRNAs near splice sites directly regulates mRNA splicing and mRNA 3'-end processing. In Bos taurus (Bovine), this protein is Pseudouridylate synthase RPUSD4, mitochondrial.